The primary structure comprises 439 residues: Serine/threonine-protein kinase 2 (439 aa).

In terms of domain architecture, Protein kinase spans 87 to 439 (NDDFYHISTG…IFSDWINGGN (353 aa)). ATP is bound by residues 93–101 (ISTGGYGIV) and lysine 117. Aspartate 307 (proton acceptor) is an active-site residue.

It belongs to the protein kinase superfamily. Ser/Thr protein kinase family. Poxviruses subfamily. Phosphorylated in vivo. Autophosphorylated in vitro.

It localises to the host endoplasmic reticulum. Its subcellular location is the host endoplasmic reticulum-Golgi intermediate compartment. It carries out the reaction L-seryl-[protein] + ATP = O-phospho-L-seryl-[protein] + ADP + H(+). It catalyses the reaction L-threonyl-[protein] + ATP = O-phospho-L-threonyl-[protein] + ADP + H(+). Its function is as follows. Essential serine-protein kinase involved in the early stage of virion morphogenesis. The protein is Serine/threonine-protein kinase 2 (OPG054) of Vaccinia virus (strain Ankara) (VACV).